A 490-amino-acid polypeptide reads, in one-letter code: UDP-glucosyl transferase 73M2 (490 aa).

The active-site Proton acceptor is the H20. D124 functions as the Charge relay in the catalytic mechanism. Residues S297, W353, A354, H371, N375, S376, E379, and Y393 each coordinate UDP.

This sequence belongs to the UDP-glycosyltransferase family. In terms of tissue distribution, mainly expressed in flowers, flower buds and young leaves, and, to a lesser extent, in old leaves, stems and roots.

Its pathway is secondary metabolite biosynthesis; terpenoid biosynthesis. Functionally, component of the oleanane-type triterpene saponins (e.g. saponarioside A and saponarioside B) biosynthetic pathway, leading to the production of natural products with detergent properties used as traditional sources of soap. A glycosyltransferase that mediates the conversion of QA-triFRX to QA-triFRXX via the elongation of the C-28 sugar chain with a D-xylose. In Saponaria officinalis (Common soapwort), this protein is UDP-glucosyl transferase 73M2.